The chain runs to 701 residues: Ubiquitin thioesterase zranb1-B (701 aa).

3 consecutive RanBP2-type zinc fingers follow at residues 3–33, 79–108, and 143–173; these read EDGI…PRPS, TSSK…QRRT, and IKGQ…PTPN. Positions 10, 13, 24, 27, 85, 88, 99, and 102 each coordinate Zn(2+). Over residues 108–121 the composition is skewed to polar residues; the sequence is TRSPTESPQSSGSG. A disordered region spans residues 108–129; the sequence is TRSPTESPQSSGSGLRSIPGPI. The Zn(2+) site is built by Cys-150, Cys-153, Cys-164, and Cys-167. Residues 197-220 are disordered; that stretch reads RWRGGCSSSNSQRRSPPTSKRDSD. Residues 202–214 show a composition bias toward polar residues; the sequence is CSSSNSQRRSPPT. ANK repeat units follow at residues 253–283 and 306–333; these read RKTD…SGGD and YTLV…QHAA. The region spanning 425 to 585 is the OTU domain; the sequence is LYALWNRTAG…RGHFSALVAM (161 aa). Cys-436 serves as the catalytic Nucleophile. His-578 (proton acceptor) is an active-site residue.

This sequence belongs to the peptidase C64 family.

It is found in the cytoplasm. The protein localises to the nucleus. The enzyme catalyses Thiol-dependent hydrolysis of ester, thioester, amide, peptide and isopeptide bonds formed by the C-terminal Gly of ubiquitin (a 76-residue protein attached to proteins as an intracellular targeting signal).. Ubiquitin thioesterase, which specifically hydrolyzes 'Lys-29'-linked and 'Lys-33'-linked diubiquitin. Also cleaves 'Lys-63'-linked chains, but with 40-fold less efficiency compared to 'Lys-29'-linked ones. Positive regulator of the Wnt signaling pathway that deubiquitinates apc protein, a negative regulator of Wnt-mediated transcription. Acts as a regulator of autophagy by mediating deubiquitination of pik3c3/vps34, thereby promoting autophagosome maturation. Plays a role in the regulation of cell morphology and cytoskeletal organization. Required in the stress fiber dynamics and cell migration. The polypeptide is Ubiquitin thioesterase zranb1-B (zranb1-b) (Xenopus laevis (African clawed frog)).